Consider the following 998-residue polypeptide: Bifunctional glutamine synthetase adenylyltransferase/adenylyl-removing enzyme (998 aa).

The adenylyl removase stretch occupies residues 1–487; sequence MVVTKPATQR…LHAKLFYQPL (487 aa). The interval 492–998 is adenylyl transferase; sequence GPAGLEIRHG…KAVVCKVFGS (507 aa).

This sequence belongs to the GlnE family. Requires Mg(2+) as cofactor.

The catalysed reaction is [glutamine synthetase]-O(4)-(5'-adenylyl)-L-tyrosine + phosphate = [glutamine synthetase]-L-tyrosine + ADP. The enzyme catalyses [glutamine synthetase]-L-tyrosine + ATP = [glutamine synthetase]-O(4)-(5'-adenylyl)-L-tyrosine + diphosphate. Its function is as follows. Involved in the regulation of glutamine synthetase GlnA, a key enzyme in the process to assimilate ammonia. When cellular nitrogen levels are high, the C-terminal adenylyl transferase (AT) inactivates GlnA by covalent transfer of an adenylyl group from ATP to specific tyrosine residue of GlnA, thus reducing its activity. Conversely, when nitrogen levels are low, the N-terminal adenylyl removase (AR) activates GlnA by removing the adenylyl group by phosphorolysis, increasing its activity. The regulatory region of GlnE binds the signal transduction protein PII (GlnB) which indicates the nitrogen status of the cell. This Mycolicibacterium paratuberculosis (strain ATCC BAA-968 / K-10) (Mycobacterium paratuberculosis) protein is Bifunctional glutamine synthetase adenylyltransferase/adenylyl-removing enzyme.